The primary structure comprises 591 residues: L-fucose isomerase (591 aa).

Active-site proton acceptor residues include E337 and D361. Residues E337, D361, and H528 each coordinate Mn(2+).

It belongs to the L-fucose isomerase family. As to quaternary structure, homohexamer. Mn(2+) is required as a cofactor.

Its subcellular location is the cytoplasm. The catalysed reaction is L-fucose = L-fuculose. Its pathway is carbohydrate degradation; L-fucose degradation; L-lactaldehyde and glycerone phosphate from L-fucose: step 1/3. In terms of biological role, converts the aldose L-fucose into the corresponding ketose L-fuculose. The polypeptide is L-fucose isomerase (Escherichia coli (strain SE11)).